A 369-amino-acid polypeptide reads, in one-letter code: Capsid protein (369 aa).

The protein localises to the host nucleus. It is found in the virion. Its function is as follows. Self-assembles to form the virion icosahedral capsid. This chain is Capsid protein, found in Avon-Heathcote Estuary associated kieseladnavirus (AHEaBV).